The primary structure comprises 819 residues: Aminopeptidase O (819 aa).

His479 serves as a coordination point for Zn(2+). Glu480 acts as the Proton acceptor in catalysis. Residues His483 and Glu502 each contribute to the Zn(2+) site. Residues Arg689–Lys699 carry the Nucleolar localization signal motif.

Belongs to the peptidase M1 family. Zn(2+) is required as a cofactor.

Its subcellular location is the nucleus. The protein resides in the nucleolus. It is found in the cytoplasm. Functionally, aminopeptidase which catalyzes the hydrolysis of amino acid residues from the N-terminus of peptide or protein substrates. This Homo sapiens (Human) protein is Aminopeptidase O.